Consider the following 223-residue polypeptide: F420-dependent NADP reductase (223 aa).

Residues 9–12 (TGDQ), 30–31 (SR), Lys35, Leu75, and Val101 each bind NADP(+).

It belongs to the F420-dependent NADP reductase family.

It carries out the reaction reduced coenzyme F420-(gamma-L-Glu)(n) + NADP(+) = oxidized coenzyme F420-(gamma-L-Glu)(n) + NADPH + 2 H(+). Catalyzes the reduction of NADP(+) with F420H(2) via hydride transfer, and the reverse reaction, i.e. the reduction of F420 with NADPH. Probably functions in the regeneration of NADPH required in biosynthetic reactions. The protein is F420-dependent NADP reductase (fno) of Methanocaldococcus jannaschii (strain ATCC 43067 / DSM 2661 / JAL-1 / JCM 10045 / NBRC 100440) (Methanococcus jannaschii).